The sequence spans 209 residues: Small ribosomal subunit protein uS3 (209 aa).

One can recognise a KH type-2 domain in the interval 38–107; it reads IRKVIKSKYA…RFIVNVEEIK (70 aa).

Belongs to the universal ribosomal protein uS3 family. Part of the 30S ribosomal subunit. Forms a tight complex with proteins S10 and S14.

Functionally, binds the lower part of the 30S subunit head. Binds mRNA in the 70S ribosome, positioning it for translation. This is Small ribosomal subunit protein uS3 from Thermosipho melanesiensis (strain DSM 12029 / CIP 104789 / BI429).